We begin with the raw amino-acid sequence, 165 residues long: Choriogonadotropin subunit beta 7 (165 aa).

Residues 1 to 20 (MEMFQGLLLLLLLSMGGTWA) form the signal peptide. 6 disulfides stabilise this stretch: Cys-29-Cys-77, Cys-43-Cys-92, Cys-46-Cys-130, Cys-54-Cys-108, Cys-58-Cys-110, and Cys-113-Cys-120. N-linked (GlcNAc...) asparagine glycans are attached at residues Asn-33 and Asn-50. Residues 131 to 165 (DDPRFQASSSSKAPPPSLPSPSRLPGPSDTPILPQ) are disordered. Ser-141, Ser-147, Ser-152, and Ser-158 each carry an O-linked (GalNAc...) serine glycan. Residues 143 to 154 (APPPSLPSPSRL) show a composition bias toward pro residues.

This sequence belongs to the glycoprotein hormones subunit beta family. In terms of assembly, heterodimer of a common alpha chain identical in LH, FSH, TSH and HCG and a unique beta chain distinct in each of the hormones and confers receptor and biological specificity. As to expression, high expression in the placenta throughout pregnancy.

The protein localises to the secreted. Functionally, beta subunit of the human chorionic gonadotropin (hCG). hCG is a complex glycoprotein composed of two glycosylated subunits alpha and beta which are non-covalently associated. The alpha subunit is identical to those in the pituitary gonadotropin hormones (LH, FSH and TSH). The beta subunits are distinct in each of the hormones and confer receptor and biological specificity. Has an essential role for pregnancy and maternal adaptation. Stimulates the ovaries to synthesize the steroids that are essential for the maintenance of pregnancy. The polypeptide is Choriogonadotropin subunit beta 7 (Homo sapiens (Human)).